Reading from the N-terminus, the 108-residue chain is Anti-sigma-B factor antagonist (108 aa).

An STAS domain is found at Leu-3–Glu-108. At Ser-57 the chain carries Phosphoserine.

The protein belongs to the anti-sigma-factor antagonist family. In terms of processing, phosphorylated by RsbW on a serine residue.

In terms of biological role, positive regulator of sigma-B activity. Non-phosphorylated RsbV binds to RsbW, preventing its association with sigma-B. When phosphorylated, releases RsbW, which is then free to complex with and inactivate sigma-B. In Staphylococcus aureus (strain NCTC 8325 / PS 47), this protein is Anti-sigma-B factor antagonist (rsbV).